We begin with the raw amino-acid sequence, 418 residues long: Endoglucanase EG-II (418 aa).

Positions 1–21 (MNKSVAPLLLAASILYGGAVA) are cleaved as a signal peptide. Gln22 is subject to Pyrrolidone carboxylic acid. Positions 22–57 (QQTVWGQCGGIGWSGPTNCAPGSACSTLNPYYAQCI) constitute a CBM1 domain. The interval 58-91 (PGATTITTSTRPPSGPTTTTRATSTSSSTPPTSS) is linker. The disordered stretch occupies residues 63–91 (ITTSTRPPSGPTTTTRATSTSSSTPPTSS). Positions 92-418 (GVRFAGVNIA…SLVSSCLARK (327 aa)) are catalytic. Cys107 and Cys113 are disulfide-bonded. A glycan (N-linked (GlcNAc) asparagine) is linked at Asn124. A disulfide bridge connects residues Cys183 and Cys190. Glu239 serves as the catalytic Proton donor/acceptor. 2 disulfides stabilise this stretch: Cys323–Cys359 and Cys364–Cys414. Catalysis depends on Glu350, which acts as the Nucleophile.

It belongs to the glycosyl hydrolase 5 (cellulase A) family.

It is found in the secreted. The catalysed reaction is Endohydrolysis of (1-&gt;4)-beta-D-glucosidic linkages in cellulose, lichenin and cereal beta-D-glucans.. Its function is as follows. Endoglucanase (EG) that cleaves the internal beta-1,4-glucosidic bonds in cellulose. The degradation of cellulose involves an interplay between different cellulolytic enzymes. Hydrolysis starts with EGs, which cut internal glycosidic linkages to reduce the polymerization degree of the substrate and creates new chain ends for exocellobiohydrolases (CBHs). The CBH release the disaccharide cellobiose from the non-reducing end of the cellulose polymer chain. Finally, beta-1,4-glucosidases hydrolyze the cellobiose and other short cello-oligosaccharides into glucose units. The protein is Endoglucanase EG-II (egl2) of Hypocrea jecorina (Trichoderma reesei).